The following is a 333-amino-acid chain: Ketol-acid reductoisomerase (NADP(+)) (333 aa).

Residues Met1–Thr171 enclose the KARI N-terminal Rossmann domain. NADP(+) is bound by residues Tyr14 to Gln17, Arg37, Thr42, and Asp72 to Gln75. Residue His97 is part of the active site. Gly123 provides a ligand contact to NADP(+). Residues Thr172–Leu317 enclose the KARI C-terminal knotted domain. Mg(2+) contacts are provided by Asp180, Glu184, Glu216, and Glu220. Position 241 (Ser241) interacts with substrate.

It belongs to the ketol-acid reductoisomerase family. Requires Mg(2+) as cofactor.

It carries out the reaction (2R)-2,3-dihydroxy-3-methylbutanoate + NADP(+) = (2S)-2-acetolactate + NADPH + H(+). The enzyme catalyses (2R,3R)-2,3-dihydroxy-3-methylpentanoate + NADP(+) = (S)-2-ethyl-2-hydroxy-3-oxobutanoate + NADPH + H(+). It functions in the pathway amino-acid biosynthesis; L-isoleucine biosynthesis; L-isoleucine from 2-oxobutanoate: step 2/4. It participates in amino-acid biosynthesis; L-valine biosynthesis; L-valine from pyruvate: step 2/4. In terms of biological role, involved in the biosynthesis of branched-chain amino acids (BCAA). Catalyzes an alkyl-migration followed by a ketol-acid reduction of (S)-2-acetolactate (S2AL) to yield (R)-2,3-dihydroxy-isovalerate. In the isomerase reaction, S2AL is rearranged via a Mg-dependent methyl migration to produce 3-hydroxy-3-methyl-2-ketobutyrate (HMKB). In the reductase reaction, this 2-ketoacid undergoes a metal-dependent reduction by NADPH to yield (R)-2,3-dihydroxy-isovalerate. This chain is Ketol-acid reductoisomerase (NADP(+)), found in Xanthomonas axonopodis pv. citri (strain 306).